A 306-amino-acid chain; its full sequence is Tyrosine recombinase XerD (306 aa).

The Core-binding (CB) domain maps to 1-83 (MGFIAQFLEM…TIKSYYEFLI (83 aa)). The Tyr recombinase domain occupies 104–299 (KLPEILSIAQ…QTNHLKKALL (196 aa)). Active-site residues include Arg145, Lys176, His251, Arg254, and His277. Tyr286 serves as the catalytic O-(3'-phospho-DNA)-tyrosine intermediate.

This sequence belongs to the 'phage' integrase family. XerD subfamily. Forms a cyclic heterotetrameric complex composed of two molecules of XerC and two molecules of XerD.

It localises to the cytoplasm. Its function is as follows. Site-specific tyrosine recombinase, which acts by catalyzing the cutting and rejoining of the recombining DNA molecules. The XerC-XerD complex is essential to convert dimers of the bacterial chromosome into monomers to permit their segregation at cell division. It also contributes to the segregational stability of plasmids. The sequence is that of Tyrosine recombinase XerD from Rickettsia conorii (strain ATCC VR-613 / Malish 7).